The following is a 634-amino-acid chain: Chaperone protein HtpG (634 aa).

The interval Met1–Arg342 is a; substrate-binding. Residues Glu343 to Gln559 form a b region. Residues Ile560–Ala634 form a c region.

This sequence belongs to the heat shock protein 90 family. As to quaternary structure, homodimer.

The protein resides in the cytoplasm. Molecular chaperone. Has ATPase activity. The sequence is that of Chaperone protein HtpG from Ectopseudomonas mendocina (strain ymp) (Pseudomonas mendocina).